The primary structure comprises 557 residues: Arginine--tRNA ligase (557 aa).

The short motif at 128 to 138 is the 'HIGH' region element; it reads ANPTGPLHVGH.

This sequence belongs to the class-I aminoacyl-tRNA synthetase family. As to quaternary structure, monomer.

It is found in the cytoplasm. It carries out the reaction tRNA(Arg) + L-arginine + ATP = L-arginyl-tRNA(Arg) + AMP + diphosphate. The chain is Arginine--tRNA ligase from Thiobacillus denitrificans (strain ATCC 25259 / T1).